The primary structure comprises 445 residues: tRNA-2-methylthio-N(6)-dimethylallyladenosine synthase (445 aa).

The MTTase N-terminal domain occupies Lys-3 to Arg-124. Cys-12, Cys-48, Cys-87, Cys-162, Cys-166, and Cys-169 together coordinate [4Fe-4S] cluster. Positions Tyr-148–Ala-380 constitute a Radical SAM core domain. A TRAM domain is found at Thr-383–Leu-445.

This sequence belongs to the methylthiotransferase family. MiaB subfamily. Monomer. Requires [4Fe-4S] cluster as cofactor.

It is found in the cytoplasm. The enzyme catalyses N(6)-dimethylallyladenosine(37) in tRNA + (sulfur carrier)-SH + AH2 + 2 S-adenosyl-L-methionine = 2-methylsulfanyl-N(6)-dimethylallyladenosine(37) in tRNA + (sulfur carrier)-H + 5'-deoxyadenosine + L-methionine + A + S-adenosyl-L-homocysteine + 2 H(+). Catalyzes the methylthiolation of N6-(dimethylallyl)adenosine (i(6)A), leading to the formation of 2-methylthio-N6-(dimethylallyl)adenosine (ms(2)i(6)A) at position 37 in tRNAs that read codons beginning with uridine. The chain is tRNA-2-methylthio-N(6)-dimethylallyladenosine synthase from Rickettsia conorii (strain ATCC VR-613 / Malish 7).